We begin with the raw amino-acid sequence, 305 residues long: RNA-binding protein rnp-1 (305 aa).

The region spanning 3-72 (SKLFVGNLPD…KVVNIKKSTS (70 aa)) is the RRM domain. Residues 84–97 (CFRCQSDEHRTPQC) form a CCHC-type zinc finger. Residues 284-305 (QQIQHQQATGSPAPVPAPPRLY) form a disordered region. Positions 296 to 305 (APVPAPPRLY) are enriched in pro residues.

In terms of tissue distribution, expressed throughout the germline.

In terms of biological role, RNA-binding protein that is required for the germ line to transition from spermatogenesis to oogenesis and allow for normal oocyte development. This is RNA-binding protein rnp-1 from Caenorhabditis elegans.